A 544-amino-acid chain; its full sequence is Matrilin-1 (544 aa).

Residues 1–26 (MRALSGPRLMLCGLLLLLFQAPCALG) form the signal peptide. Positions 42 to 217 (DLVFVVDSSR…SVIEKLSKKF (176 aa)) constitute a VWFA 1 domain. Asn77 carries an N-linked (GlcNAc...) asparagine glycan. An EGF-like domain is found at 224 to 264 (VSDLCATGDHDCEQVCVSSPGSYTCACREGFTLNSDGKTCN). Disulfide bonds link Cys228–Cys239, Cys235–Cys248, and Cys250–Cys263. Positions 276-448 (DLVFLIDGSK…KTINQIGKKL (173 aa)) constitute a VWFA 2 domain. Asn345 carries N-linked (GlcNAc...) asparagine glycosylation.

In terms of assembly, homotrimer. Part of a complex composed of MATN1 (via VWFA1 domain), type 2 collagens and type 6 collagens. Forms a complex (via covalent bonds) with ACAN; the interaction increases in abundance with increasing age of the organism via an increase in occupancy of MATN1 binding sites. Interacts with COMP. Post-translationally, N-glycosylated; reduces binding affinity for type 2 collagens. As to expression, expressed in trachea from fetus into adulthood (at protein level).

It is found in the secreted. The protein localises to the extracellular space. It localises to the extracellular matrix. In terms of biological role, a major component of the extracellular matrix of non-articular cartilage. Binds to type 2 collagens and forms long concatenated protein networks as part of the extracellular matrix. Required for the network-like organization and bundling of collagen fibrils surrounding chondrocytes in the zones of maturation and hypertrophy. Required for mechanotransduction and adaption to mechanical loading in cartilage chondrocytes, resulting in an increase in expression of the extracellular matrix components ACAN and COL2A1. Acts as a moderator of angiogenesis in response to injury. This Bos taurus (Bovine) protein is Matrilin-1.